The primary structure comprises 335 residues: N-acetyl-gamma-glutamyl-phosphate reductase (335 aa).

Cys-155 is a catalytic residue.

Belongs to the NAGSA dehydrogenase family. Type 1 subfamily.

The protein resides in the cytoplasm. The catalysed reaction is N-acetyl-L-glutamate 5-semialdehyde + phosphate + NADP(+) = N-acetyl-L-glutamyl 5-phosphate + NADPH + H(+). It participates in amino-acid biosynthesis; L-arginine biosynthesis; N(2)-acetyl-L-ornithine from L-glutamate: step 3/4. In terms of biological role, catalyzes the NADPH-dependent reduction of N-acetyl-5-glutamyl phosphate to yield N-acetyl-L-glutamate 5-semialdehyde. In Pasteurella multocida (strain Pm70), this protein is N-acetyl-gamma-glutamyl-phosphate reductase.